The chain runs to 559 residues: SH3 domain-binding protein 2 (559 aa).

In terms of domain architecture, PH spans 26 to 130 (GVAKAGYLHK…WMAFVRREIG (105 aa)). The segment at 164–449 (LSSYPMDNED…EDSDEDYEKV (286 aa)) is disordered. Residues 170 to 184 (DNEDYEHEDEDDSYL) show a composition bias toward acidic residues. Y174 and Y183 each carry phosphotyrosine; by SYK. The short motif at 201 to 210 (PPAYPPPPVP) is the SH3-binding element. Pro residues-rich tracts occupy residues 202–213 (PAYPPPPVPVPR) and 233–242 (PLLPPPPPKR). Residues 252–265 (EDAKDALGLRRVEP) show a composition bias toward basic and acidic residues. S277 carries the phosphoserine modification. Residues 313–327 (TSSVSSSTTMAVATS) show a composition bias toward low complexity. Basic and acidic residues predominate over residues 360-371 (KIAEEPSPREAA). The segment covering 375-386 (PVPPVAPRPPVQ) has biased composition (pro residues). S414 and S425 each carry phosphoserine. Residues 437 to 446 (TGEEDSDEDY) show a composition bias toward acidic residues. Position 446 is a phosphotyrosine; by SYK (Y446). An SH2 domain is found at 455–553 (VFVNTTESCE…HQSLLLRHPY (99 aa)).

In terms of processing, phosphorylated. Phosphorylation at Tyr-446 may stimulate the activity of the LYN kinase.

In terms of biological role, binds differentially to the SH3 domains of certain proteins of signal transduction pathways. Binds to phosphatidylinositols; linking the hemopoietic tyrosine kinase fes to the cytoplasmic membrane in a phosphorylation dependent mechanism. The chain is SH3 domain-binding protein 2 (Sh3bp2) from Mus musculus (Mouse).